The sequence spans 274 residues: NH(3)-dependent NAD(+) synthetase (274 aa).

Position 46-53 (46-53 (GISGGQDS)) interacts with ATP. Residue D52 participates in Mg(2+) binding. R140 is a binding site for deamido-NAD(+). T160 contacts ATP. Mg(2+) is bound at residue E165. Residues K173 and D180 each contribute to the deamido-NAD(+) site. Residues K189 and T211 each coordinate ATP. Residue 260-261 (HK) coordinates deamido-NAD(+).

This sequence belongs to the NAD synthetase family. In terms of assembly, homodimer.

It carries out the reaction deamido-NAD(+) + NH4(+) + ATP = AMP + diphosphate + NAD(+) + H(+). The protein operates within cofactor biosynthesis; NAD(+) biosynthesis; NAD(+) from deamido-NAD(+) (ammonia route): step 1/1. In terms of biological role, catalyzes the ATP-dependent amidation of deamido-NAD to form NAD. Uses ammonia as a nitrogen source. The chain is NH(3)-dependent NAD(+) synthetase from Lactococcus lactis subsp. cremoris (strain MG1363).